The sequence spans 452 residues: NAD kinase 2, mitochondrial (452 aa).

Residues 1-50 (MTCYRGFLLGSCRRVAGGRAALRGSGSGADGRRHLGHGQPRELAGGGSPA) constitute a mitochondrion transit peptide. Residues 23–52 (RGSGSGADGRRHLGHGQPRELAGGGSPADG) are disordered. Lys64 is subject to N6-acetyllysine; alternate. Lys64 is subject to N6-succinyllysine; alternate. Ser176 is subject to Phosphoserine. Residue Lys312 is modified to N6-succinyllysine. Lys327 carries the post-translational modification N6-acetyllysine; alternate. The residue at position 327 (Lys327) is an N6-succinyllysine; alternate. A Phosphoserine modification is found at Ser377. Residue Lys407 is modified to N6-acetyllysine.

The protein belongs to the NAD kinase family. As to quaternary structure, homodimer.

It localises to the mitochondrion. The catalysed reaction is NAD(+) + ATP = ADP + NADP(+) + H(+). With respect to regulation, inhibited by NADH, NADPH and NADP(+). Functionally, mitochondrial NAD(+) kinase that phosphorylates NAD(+) to yield NADP(+). Can use both ATP or inorganic polyphosphate as the phosphoryl donor. The polypeptide is NAD kinase 2, mitochondrial (Nadk2) (Mus musculus (Mouse)).